The chain runs to 223 residues: Ribose-5-phosphate isomerase A (223 aa).

Residues 28–31, 81–84, and 94–97 contribute to the substrate site; these read TGST, DGAD, and KGGG. The Proton acceptor role is filled by glutamate 103. A substrate-binding site is contributed by lysine 121.

It belongs to the ribose 5-phosphate isomerase family. Homodimer.

The catalysed reaction is aldehydo-D-ribose 5-phosphate = D-ribulose 5-phosphate. It participates in carbohydrate degradation; pentose phosphate pathway; D-ribose 5-phosphate from D-ribulose 5-phosphate (non-oxidative stage): step 1/1. Its function is as follows. Catalyzes the reversible conversion of ribose-5-phosphate to ribulose 5-phosphate. This chain is Ribose-5-phosphate isomerase A, found in Herminiimonas arsenicoxydans.